The sequence spans 369 residues: DNA replication and repair protein RecF (369 aa).

30 to 37 (GPNGSGKT) is a binding site for ATP.

The protein belongs to the RecF family.

It is found in the cytoplasm. Its function is as follows. The RecF protein is involved in DNA metabolism; it is required for DNA replication and normal SOS inducibility. RecF binds preferentially to single-stranded, linear DNA. It also seems to bind ATP. This Chlorobium luteolum (strain DSM 273 / BCRC 81028 / 2530) (Pelodictyon luteolum) protein is DNA replication and repair protein RecF.